We begin with the raw amino-acid sequence, 283 residues long: Nucleoid occlusion protein (283 aa).

The tract at residues 1-26 (MKQPFSRLFGFGDKQDQEMETGKQEE) is disordered. Positions 13-26 (DKQDQEMETGKQEE) are enriched in basic and acidic residues. The H-T-H motif DNA-binding region spans 143-162 (ESLAQRLGKGQSTIANKLRL).

This sequence belongs to the ParB family.

It is found in the cytoplasm. Its subcellular location is the nucleoid. In terms of biological role, effects nucleoid occlusion by binding relatively nonspecifically to DNA and preventing the assembly of the division machinery in the vicinity of the nucleoid, especially under conditions that disturb the cell cycle. It helps to coordinate cell division and chromosome segregation by preventing the formation of the Z ring through the nucleoid, which would cause chromosome breakage. This is Nucleoid occlusion protein from Halalkalibacterium halodurans (strain ATCC BAA-125 / DSM 18197 / FERM 7344 / JCM 9153 / C-125) (Bacillus halodurans).